The following is a 494-amino-acid chain: UDP-N-acetylmuramate--L-alanine ligase (494 aa).

ATP is bound at residue 140–146; that stretch reads GTHGKTT.

The protein belongs to the MurCDEF family.

The protein localises to the cytoplasm. It catalyses the reaction UDP-N-acetyl-alpha-D-muramate + L-alanine + ATP = UDP-N-acetyl-alpha-D-muramoyl-L-alanine + ADP + phosphate + H(+). It participates in cell wall biogenesis; peptidoglycan biosynthesis. Cell wall formation. The polypeptide is UDP-N-acetylmuramate--L-alanine ligase (Nostoc sp. (strain PCC 7120 / SAG 25.82 / UTEX 2576)).